The following is a 757-amino-acid chain: Relaxin receptor 1 (757 aa).

Residues 1 to 408 are Extracellular-facing; it reads MTSGSVFFYI…LENLLASIIQ (408 aa). Positions 26-63 constitute an LDL-receptor class A domain; sequence KCSLGYFPCGNITKCLPQLLHCNGVDDCGNQADEDNCG. Disulfide bonds link C27-C40, C34-C53, and C47-C62. N-linked (GlcNAc...) asparagine glycosylation is present at N36. Positions 45, 48, 50, 52, 58, and 59 each coordinate Ca(2+). The region spanning 91–127 is the LRRNT domain; that stretch reads ETPECLVGSVPVQCLCRGLELDCDETNLRAVPSVSSN. Residue N127 is glycosylated (N-linked (GlcNAc...) asparagine). 9 LRR repeats span residues 151–172, 175–196, 199–220, 223–244, 248–269, 272–293, 296–317, 320–341, and 344–365; these read DLQKLYLQNNKITSISIYAFRG, SLTKLYLSHNRITFLKPGVFED, RLEWLIIEDNHLSRISPPTFYG, SLILLVLMNNVLTRLPDKPLCQ, RLHWLDLEGNHIHNLRNLTLIS, NLTVLVMGKNKINHLNENTFAP, KLDELDLGSNKIENLPPLIFKD, ELSQLNLSYNPIQKIQANQFDY, and KLKSLSLEGIEISNIQQRMFRP. N264 and N272 each carry an N-linked (GlcNAc...) asparagine glycan. Residue N325 is glycosylated (N-linked (GlcNAc...) asparagine). N-linked (GlcNAc...) asparagine glycosylation occurs at N368. Residues 409-429 form a helical membrane-spanning segment; the sequence is RVFVWVVSAVTCFGNVFVICM. Topologically, residues 430–443 are cytoplasmic; it reads RPYIRSENKLYAMS. The chain crosses the membrane as a helical span at residues 444–464; sequence IISLCCADCLMGIYLFVIGGF. At 465-486 the chain is on the extracellular side; sequence DLKFRGEYNKHAQLWMESTHCQ. A disulfide bridge connects residues C485 and C563. A helical membrane pass occupies residues 487–507; the sequence is LVGSLAILSTEVSVLLLTFLT. Topologically, residues 508-527 are cytoplasmic; it reads LEKYICIVYPFRCVRPGKCR. Residues 528 to 548 traverse the membrane as a helical segment; the sequence is TITVLILIWITGFIVAFIPLS. At 549–577 the chain is on the extracellular side; it reads NKEFFKNYYGTNGVCFPLHSEDTESIGAQ. Residues 578-598 form a helical membrane-spanning segment; sequence VYSVAIFLGINLAAFIIIVFS. Residues 599–629 lie on the Cytoplasmic side of the membrane; that stretch reads YGSMFYSVHQSAITATEIRNQVKKEMILAKR. Residues 630-650 traverse the membrane as a helical segment; the sequence is FFFIVFTDALCWIPIFVVKFL. Over 651–660 the chain is Extracellular; the sequence is SLLQVEIPGT. A helical membrane pass occupies residues 661 to 681; that stretch reads ITSWVVIFILPINSALNPILY. Over 682 to 757 the chain is Cytoplasmic; it reads TLTTRPFKEM…SQSTRLNSYS (76 aa).

The protein belongs to the G-protein coupled receptor 1 family. As to quaternary structure, interacts with C1QTNF8.

Its subcellular location is the cell membrane. In terms of biological role, receptor for relaxins. The activity of this receptor is mediated by G proteins leading to stimulation of adenylate cyclase and an increase of cAMP. Binding of the ligand may also activate a tyrosine kinase pathway that inhibits the activity of a phosphodiesterase that degrades cAMP. The chain is Relaxin receptor 1 (RXFP1) from Pongo abelii (Sumatran orangutan).